The following is a 543-amino-acid chain: Chaperonin GroEL 4 (543 aa).

ATP is bound by residues 29-32 (TLGP), 86-90 (DGTTT), G411, 476-478 (DAA), and D492.

Belongs to the chaperonin (HSP60) family. As to quaternary structure, forms a cylinder of 14 subunits composed of two heptameric rings stacked back-to-back. Interacts with the co-chaperonin GroES.

It localises to the cytoplasm. The enzyme catalyses ATP + H2O + a folded polypeptide = ADP + phosphate + an unfolded polypeptide.. Its function is as follows. Together with its co-chaperonin GroES, plays an essential role in assisting protein folding. The GroEL-GroES system forms a nano-cage that allows encapsulation of the non-native substrate proteins and provides a physical environment optimized to promote and accelerate protein folding. The polypeptide is Chaperonin GroEL 4 (Bradyrhizobium diazoefficiens (strain JCM 10833 / BCRC 13528 / IAM 13628 / NBRC 14792 / USDA 110)).